Consider the following 456-residue polypeptide: Glycerol-3-phosphate acyltransferase 4 (456 aa).

An N-terminal signal peptide occupies residues 1–37 (MFLLLPFDSLIVNLLGISLTVLFTLLLVFIIVPAIFG). Transmembrane regions (helical) follow at residues 156-176 (ISLR…CFLL) and 180-200 (IALA…VGYL). N247 carries N-linked (GlcNAc...) asparagine glycosylation. The HXXXXD motif signature appears at 248–253 (HTSPID). Residues N327, N328, and N362 are each glycosylated (N-linked (GlcNAc...) asparagine).

The protein belongs to the 1-acyl-sn-glycerol-3-phosphate acyltransferase family. As to expression, highly expressed in testis.

The protein localises to the endoplasmic reticulum membrane. It carries out the reaction sn-glycerol 3-phosphate + an acyl-CoA = a 1-acyl-sn-glycero-3-phosphate + CoA. It catalyses the reaction dodecanoyl-CoA + sn-glycerol 3-phosphate = 1-dodecanoyl-sn-glycerol 3-phosphate + CoA. The enzyme catalyses sn-glycerol 3-phosphate + hexadecanoyl-CoA = 1-hexadecanoyl-sn-glycero-3-phosphate + CoA. The catalysed reaction is sn-glycerol 3-phosphate + octadecanoyl-CoA = 1-octadecanoyl-sn-glycero-3-phosphate + CoA. It carries out the reaction sn-glycerol 3-phosphate + (9Z)-octadecenoyl-CoA = 1-(9Z-octadecenoyl)-sn-glycero-3-phosphate + CoA. It catalyses the reaction (9Z,12Z)-octadecadienoyl-CoA + sn-glycerol 3-phosphate = 1-(9Z,12Z)-octadecadienoyl-sn-glycero-3-phosphate + CoA. The protein operates within phospholipid metabolism; CDP-diacylglycerol biosynthesis; CDP-diacylglycerol from sn-glycerol 3-phosphate: step 1/3. Its function is as follows. Converts glycerol-3-phosphate to 1-acyl-sn-glycerol-3-phosphate (lysophosphatidic acid or LPA) by incorporating an acyl moiety at the sn-1 position of the glycerol backbone. Active against both saturated and unsaturated long-chain fatty acyl-CoAs. Protects cells against lipotoxicity. The sequence is that of Glycerol-3-phosphate acyltransferase 4 from Mus musculus (Mouse).